We begin with the raw amino-acid sequence, 610 residues long: ABC transporter ATP-binding protein ARB1 (610 aa).

The tract at residues 1–43 (MPPVSASKAKRDAKKAEREAKKAAAGKTIRKLGRKKEAAAEES) is disordered. Residues Ser43 and Ser65 each carry the phosphoserine modification. ABC transporter domains follow at residues 82–323 (IKLS…TNQM) and 393–610 (LAFD…NVVL). 114–121 (GENGCGKS) provides a ligand contact to ATP. The residue at position 196 (Ser196) is a Phosphoserine. 428–435 (GPNGVGKS) lines the ATP pocket. At Thr446 the chain carries Phosphothreonine.

This sequence belongs to the ABC transporter superfamily. ABCF family. EF3 subfamily. As to quaternary structure, interacts with LSG1.

Its subcellular location is the cytoplasm. It localises to the nucleus. It catalyses the reaction ATP + H2O = ADP + phosphate + H(+). Its function is as follows. ATPase that stimulates 40S and 60S ribosome biogenesis. Also involved in ribosome-associated quality control (RQC) pathway, a pathway that mediates ubiquitination and extraction of incompletely synthesized nascent chains for proteasomal degradation: localizes to the ribosomal E-site and stimulates VMS1-dependent tRNA cleavage. In Saccharomyces cerevisiae (strain ATCC 204508 / S288c) (Baker's yeast), this protein is ABC transporter ATP-binding protein ARB1 (ARB1).